The following is a 509-amino-acid chain: Meiotic fizzy-related protein 2 (509 aa).

WD repeat units lie at residues 159-196 (LDDFYISPLAWSTNGELAVALAQNVYLWSEISGPSIME), 199-238 (PTTYEVSSLAYSSDGGFLAIARVNGFVEIWNRKTKNNRCD), 242-281 (HHDGDISCMAWSPINWTLLVGGSTGNIYVYRRTKSMMRRV), 287-326 (VHQEQVCGLEWNYDGTQFASGGNDNLVCIFDIDSLENKKF), 329-371 (IHLA…RIHS), and 437-477 (IHTH…QEIH).

It belongs to the WD repeat CDC20/Fizzy family.

It localises to the nucleus. Has a role in meiosis. The polypeptide is Meiotic fizzy-related protein 2 (mfr2) (Schizosaccharomyces pombe (strain 972 / ATCC 24843) (Fission yeast)).